Reading from the N-terminus, the 1007-residue chain is Protocadherin alpha-C2 (1007 aa).

Residues 1-42 form the signal peptide; sequence MEQAGTRPAATEHPRLRRPMPWLLLLPLLLLLLLLLPGPAAS. Cadherin domains follow at residues 43–148, 149–257, 258–365, 374–469, and 470–579; these read QLRY…SPRF, PRPN…SPAF, DQST…APEV, VPEN…PPSF, and LEDS…APHI. Over 43–708 the chain is Extracellular; sequence QLRYSVPEEQ…RTYSEITLYL (666 aa). N-linked (GlcNAc...) asparagine glycosylation is found at Asn280 and Asn436. Asn586 and Asn657 each carry an N-linked (GlcNAc...) asparagine glycan. The region spanning 594-691 is the Cadherin 6 domain; the sequence is GPRTAPAGYL…DRVSKILPDT (98 aa). A helical membrane pass occupies residues 709-729; sequence IIALSTVSFIFLLTIIILSII. The Cytoplasmic portion of the chain corresponds to 730–1007; sequence KCYRYTAYGT…GNSTTDNSDQ (278 aa). 4 PXXP repeats span residues 856–859, 889–892, 930–933, and 948–951; these read PRQP, PGGP, PGNP, and PGSP. Residues 856–951 are 4 X 4 AA repeats of P-X-X-P; the sequence is PRQPNPDWRY…PDKFIIPGSP (96 aa). The tract at residues 885-1007 is disordered; the sequence is LRAGPGGPDQ…GNSTTDNSDQ (123 aa). The span at 966–980 shows a compositional bias: basic and acidic residues; the sequence is DKSDFITFGKKEETK.

The protein localises to the cell membrane. In terms of biological role, potential calcium-dependent cell-adhesion protein. May be involved in the establishment and maintenance of specific neuronal connections in the brain. The chain is Protocadherin alpha-C2 (PCDHAC2) from Pan troglodytes (Chimpanzee).